A 118-amino-acid polypeptide reads, in one-letter code: NADH dehydrogenase [ubiquinone] iron-sulfur protein 5-A (118 aa).

Positions 46 to 87 (KGRCYDFWMDFSECMSHCREPKDCTLLREDYLECLHHSKEFQ) constitute a CHCH domain. 2 short sequence motifs (cx9C motif) span residues 49–59 (CYDFWMDFSEC) and 69–79 (CTLLREDYLEC). 2 disulfides stabilise this stretch: Cys49-Cys79 and Cys59-Cys69. The interval 98–118 (RKLRAASRKGEEAGDGTHNHH) is disordered.

The protein belongs to the complex I NDUFS5 subunit family. Complex I is composed of at least 49 different subunits. This is a component of the iron-sulfur (IP) fragment of the enzyme.

The protein resides in the mitochondrion. It localises to the mitochondrion inner membrane. The protein localises to the mitochondrion intermembrane space. In terms of biological role, accessory subunit of the mitochondrial membrane respiratory chain NADH dehydrogenase (Complex I), that is believed not to be involved in catalysis. Complex I functions in the transfer of electrons from NADH to the respiratory chain. The immediate electron acceptor for the enzyme is believed to be ubiquinone. The protein is NADH dehydrogenase [ubiquinone] iron-sulfur protein 5-A of Arabidopsis thaliana (Mouse-ear cress).